The primary structure comprises 418 residues: Hydroxysqualene dehydroxylase (418 aa).

This sequence belongs to the HpnE family.

It carries out the reaction squalene + FAD + H2O + H(+) = hydroxysqualene + FADH2. The protein operates within secondary metabolite biosynthesis; hopanoid biosynthesis. Functionally, involved in the biosynthesis of the hopanoid precursor squalene (SQ) from farnesyl diphosphate (FPP). Catalyzes the third (last) step, the reduction of hydroxysqualene (HSQ) to SQ. The protein is Hydroxysqualene dehydroxylase of Rhodopseudomonas palustris (strain ATCC BAA-98 / CGA009).